Reading from the N-terminus, the 170-residue chain is Shikimate kinase (170 aa).

Residue 11–16 (LSGKST) coordinates ATP. Ser-15 contributes to the Mg(2+) binding site. Residues Asp-33, Arg-57, and Gly-79 each coordinate substrate. Arg-119 is a binding site for ATP. A substrate-binding site is contributed by Arg-137.

The protein belongs to the shikimate kinase family. Monomer. Mg(2+) is required as a cofactor.

It is found in the cytoplasm. The enzyme catalyses shikimate + ATP = 3-phosphoshikimate + ADP + H(+). Its pathway is metabolic intermediate biosynthesis; chorismate biosynthesis; chorismate from D-erythrose 4-phosphate and phosphoenolpyruvate: step 5/7. Catalyzes the specific phosphorylation of the 3-hydroxyl group of shikimic acid using ATP as a cosubstrate. This Clostridium botulinum (strain Kyoto / Type A2) protein is Shikimate kinase.